Reading from the N-terminus, the 804-residue chain is Leucine--tRNA ligase (804 aa).

Residues 40 to 51 (PYPSGAGLHVGH) carry the 'HIGH' region motif. Residues 576–580 (KMSKS) carry the 'KMSKS' region motif. Lys-579 contacts ATP.

Belongs to the class-I aminoacyl-tRNA synthetase family.

The protein resides in the cytoplasm. It catalyses the reaction tRNA(Leu) + L-leucine + ATP = L-leucyl-tRNA(Leu) + AMP + diphosphate. The chain is Leucine--tRNA ligase from Bacillus pumilus (strain SAFR-032).